The following is a 352-amino-acid chain: Ferrochelatase (352 aa).

Fe cation is bound by residues His222 and Glu303.

Belongs to the ferrochelatase family.

It localises to the cytoplasm. The catalysed reaction is heme b + 2 H(+) = protoporphyrin IX + Fe(2+). It functions in the pathway porphyrin-containing compound metabolism; protoheme biosynthesis; protoheme from protoporphyrin-IX: step 1/1. Its function is as follows. Catalyzes the ferrous insertion into protoporphyrin IX. The sequence is that of Ferrochelatase from Brucella abortus (strain S19).